We begin with the raw amino-acid sequence, 195 residues long: HTH-type transcriptional regulator BetI (195 aa).

Residues 8 to 68 enclose the HTH tetR-type domain; it reads PIRRRQLIDA…ATMRDITSQL (61 aa). The segment at residues 31-50 is a DNA-binding region (H-T-H motif); it reads TIAQIARRAGVSTGIISHYF.

It participates in amine and polyamine biosynthesis; betaine biosynthesis via choline pathway [regulation]. Its function is as follows. Repressor involved in the biosynthesis of the osmoprotectant glycine betaine. It represses transcription of the choline transporter BetT and the genes of BetAB involved in the synthesis of glycine betaine. This Klebsiella pneumoniae (strain 342) protein is HTH-type transcriptional regulator BetI.